Consider the following 279-residue polypeptide: Diaminopimelate epimerase (279 aa).

Asn-13 and Asn-66 together coordinate substrate. Residue Cys-75 is the Proton donor of the active site. Substrate contacts are provided by residues 76-77 (GN), Asn-162, Asn-195, and 213-214 (ER). The Proton acceptor role is filled by Cys-222. Substrate is bound at residue 223–224 (GT).

The protein belongs to the diaminopimelate epimerase family. In terms of assembly, homodimer.

The protein localises to the cytoplasm. The catalysed reaction is (2S,6S)-2,6-diaminopimelate = meso-2,6-diaminopimelate. The protein operates within amino-acid biosynthesis; L-lysine biosynthesis via DAP pathway; DL-2,6-diaminopimelate from LL-2,6-diaminopimelate: step 1/1. Functionally, catalyzes the stereoinversion of LL-2,6-diaminopimelate (L,L-DAP) to meso-diaminopimelate (meso-DAP), a precursor of L-lysine and an essential component of the bacterial peptidoglycan. The protein is Diaminopimelate epimerase of Synechocystis sp. (strain ATCC 27184 / PCC 6803 / Kazusa).